The chain runs to 108 residues: UPF0251 protein PF0620 (108 aa).

The protein belongs to the UPF0251 family.

The polypeptide is UPF0251 protein PF0620 (Pyrococcus furiosus (strain ATCC 43587 / DSM 3638 / JCM 8422 / Vc1)).